Here is a 336-residue protein sequence, read N- to C-terminus: Aspartate--ammonia ligase (336 aa).

It belongs to the class-II aminoacyl-tRNA synthetase family. AsnA subfamily.

The protein resides in the cytoplasm. It carries out the reaction L-aspartate + NH4(+) + ATP = L-asparagine + AMP + diphosphate + H(+). It participates in amino-acid biosynthesis; L-asparagine biosynthesis; L-asparagine from L-aspartate (ammonia route): step 1/1. The chain is Aspartate--ammonia ligase from Limosilactobacillus fermentum (strain NBRC 3956 / LMG 18251) (Lactobacillus fermentum).